The chain runs to 267 residues: CD82 antigen (267 aa).

Residues 1–11 (MGSACIKVTKY) lie on the Cytoplasmic side of the membrane. The S-palmitoyl cysteine moiety is linked to residue C5. The chain crosses the membrane as a helical span at residues 12–32 (FLFLFNLIFFILGAVILGFGV). At 33–53 (WILADKSSFISVLQTSSSSLR) the chain is on the extracellular side. The helical transmembrane segment at 54–72 (MGAYVFIGVGAVTMLMGFL) threads the bilayer. Over 73 to 83 (GCIGAVNEVRC) the chain is Cytoplasmic. C74 is lipidated: S-palmitoyl cysteine. A helical membrane pass occupies residues 84–110 (LLGLYFAFLLLILIAQVTAGALFYFNM). Topologically, residues 111–228 (GKLKQEMGGI…KVQAWLQENL (118 aa)) are extracellular. N-linked (GlcNAc...) asparagine glycans are attached at residues N129, N157, and N198. The chain crosses the membrane as a helical span at residues 229–250 (GIILGVGVGVAIIELLGMVLSI). Topologically, residues 251–267 (CLCRHVHSEDYSKVPKY) are cytoplasmic.

It belongs to the tetraspanin (TM4SF) family. As to quaternary structure, forms homooligomers. Interacts directly with IGSF8. Interacts with EGFR. Interacts with VEGFA and PDGFB. Interacts with ITGA4. Interacts with ITGA6; this interaction reduces ITGA6 cell surface expression. Interacts with ITGB1. Interacts with TLR4; this interaction inhibits TLR4-mediated signaling pathway. Interacts with TLR9. Interacts with PLAUR. In terms of processing, palmitoylated. Palmitoylation contributes to oligomerization and surface expression. In terms of tissue distribution, lymphoid specific.

The protein resides in the cell membrane. Its subcellular location is the cytoplasmic vesicle. It is found in the phagosome. Structural component of specialized membrane microdomains known as tetraspanin-enriched microdomains (TERMs), which act as platforms for receptor clustering and signaling. Participates thereby in diverse biological functions such as cell signal transduction, adhesion, migration and protein trafficking. Acts as a attenuator of EGF signaling, facilitating ligand-induced endocytosis of the receptor and its subsequent desensitization. Mechanistically, modulates ligand-induced ubiquitination and trafficking of EGFR via E3 ligase CBL phosphorylation by PKC. Increases cell-matrix adhesion by regulating the membrane organization of integrin alpha4/ITA4. Modulates adhesion and suppresses cell migration through other integrins such as the alpha6/ITGA6 and beta1/ITGB1. Decreases cell-associated plasminogen activation by interfering with the interaction between urokinase-type plasminogen activator/PLAU and its receptor PLAUR. Associates with CD4 or CD8 and delivers costimulatory signals for the TCR/CD3 pathway. Plays a role in TLR9 trafficking to acidified CpG-containing compartments by controlling interaction between TLR9 and VAMP3 and subsequent myddosome assembly. Inhibits LPS-induced inflammatory response by preventing binding of LPS to TLR4 on the cell surface. Plays a role in the activation of macrophages into anti-inflammatory phenotypes. Independently of Toll-like receptor (TLR) signaling, is recruited to pathogen-containing phagosomes prior to fusion with lysosomes and thereby participates in antigen presentation. Also acts to control angiogenesis and switch angiogenic milieu to quiescent state by binding and sequestering VEGFA and PDGFB to inhibit the signaling they trigger via their respective cell surface receptor. This chain is CD82 antigen (CD82), found in Homo sapiens (Human).